A 270-amino-acid polypeptide reads, in one-letter code: Oxidized low-density lipoprotein receptor 1 (270 aa).

Residues 1 to 14 (MTVDDPKGMKDQLD) are compositionally biased toward basic and acidic residues. The tract at residues 1–22 (MTVDDPKGMKDQLDQKPNGKTA) is disordered. Residues 1–33 (MTVDDPKGMKDQLDQKPNGKTAKGFVSSWRWYP) lie on the Cytoplasmic side of the membrane. The chain crosses the membrane as a helical; Signal-anchor for type II membrane protein span at residues 34–56 (AAVTLGVLCLGLLVTVILLILQL). Cysteine 42 carries the S-palmitoyl cysteine lipid modification. The neck stretch occupies residues 57 to 146 (SQVSDLIKKQ…SGPCPQDWLW (90 aa)). Topologically, residues 57 to 270 (SQVSDLIKKQ…QKKANLLRAQ (214 aa)) are extracellular. Residues asparagine 69 and asparagine 135 are each glycosylated (N-linked (GlcNAc...) asparagine). Residues 85–135 (RRSEKSAQESQKELKEMIETLAHKLDEKSKKLMELHRQNLNLQEVLKEAAN) are a coiled coil. Disulfide bonds link cysteine 140–cysteine 151, cysteine 168–cysteine 260, and cysteine 239–cysteine 252. One can recognise a C-type lectin domain in the interval 147–261 (HEENCYQFSS…CILTAFSICQ (115 aa)).

Homodimer; disulfide-linked. May form a hexamer composed of 3 homodimers. Interacts with HSP70. N-glycosylated. Highly expressed in endothelial cells, aortic intima and lung. Expressed at low level in other tissues.

It is found in the cell membrane. The protein resides in the membrane raft. It localises to the secreted. Its function is as follows. Receptor that mediates the recognition, internalization and degradation of oxidatively modified low density lipoprotein (oxLDL) by vascular endothelial cells. OxLDL is a marker of atherosclerosis that induces vascular endothelial cell activation and dysfunction, resulting in pro-inflammatory responses, pro-oxidative conditions and apoptosis. Its association with oxLDL induces the activation of NF-kappa-B through an increased production of intracellular reactive oxygen and a variety of pro-atherogenic cellular responses including a reduction of nitric oxide (NO) release, monocyte adhesion and apoptosis. In addition to binding oxLDL, it acts as a receptor for the HSP70 protein involved in antigen cross-presentation to naive T-cells in dendritic cells, thereby participating in cell-mediated antigen cross-presentation. Also involved in inflammatory process, by acting as a leukocyte-adhesion molecule at the vascular interface in endotoxin-induced inflammation. Also acts as a receptor for advanced glycation end (AGE) products, activated platelets, monocytes, apoptotic cells and both Gram-negative and Gram-positive bacteria. This Bos taurus (Bovine) protein is Oxidized low-density lipoprotein receptor 1 (OLR1).